The sequence spans 285 residues: Nucleotide-binding protein Pmen_0867 (285 aa).

8–15 contacts ATP; that stretch reads GRSGSGKS. 60 to 63 contributes to the GTP binding site; sequence DARN.

Belongs to the RapZ-like family.

Displays ATPase and GTPase activities. The polypeptide is Nucleotide-binding protein Pmen_0867 (Ectopseudomonas mendocina (strain ymp) (Pseudomonas mendocina)).